We begin with the raw amino-acid sequence, 269 residues long: Tryptophan synthase alpha chain (269 aa).

Residues Glu56 and Asp67 each act as proton acceptor in the active site.

It belongs to the TrpA family. Tetramer of two alpha and two beta chains.

It carries out the reaction (1S,2R)-1-C-(indol-3-yl)glycerol 3-phosphate + L-serine = D-glyceraldehyde 3-phosphate + L-tryptophan + H2O. It functions in the pathway amino-acid biosynthesis; L-tryptophan biosynthesis; L-tryptophan from chorismate: step 5/5. Functionally, the alpha subunit is responsible for the aldol cleavage of indoleglycerol phosphate to indole and glyceraldehyde 3-phosphate. This Mycobacterium marinum (strain ATCC BAA-535 / M) protein is Tryptophan synthase alpha chain.